A 102-amino-acid chain; its full sequence is Small ribosomal subunit protein uS10 (102 aa).

This sequence belongs to the universal ribosomal protein uS10 family. As to quaternary structure, part of the 30S ribosomal subunit.

Involved in the binding of tRNA to the ribosomes. This chain is Small ribosomal subunit protein uS10, found in Enterococcus faecalis (strain ATCC 700802 / V583).